Here is a 271-residue protein sequence, read N- to C-terminus: MKRYVFMLSDGTGITAETLGNSLITQFENIQFEKITIPYIDSTHRAESVVLRINQCFSEQGTKPLVFMTLVDPEIRQAIKKAHACVFDLFSIFIGPLENELEEKSSYTVGRTHGVANVKSYSHRIEAIDFALSHDDGIKTRGYDKADIILIGVSRCGKTPSCLYMALQYGILAANYPFTEEDLVGFRLPDVLRPYKQKLFGLTIDAQRLQQIRSERRPNSKYASAEQCRLEVTEVEAMYQRENIPYINSTKYSIEEISTKVLAIAGLQRKI.

152-159 is an ADP binding site; it reads GVSRCGKT.

It belongs to the pyruvate, phosphate/water dikinase regulatory protein family. PSRP subfamily.

It catalyses the reaction [pyruvate, water dikinase] + ADP = [pyruvate, water dikinase]-phosphate + AMP + H(+). The enzyme catalyses [pyruvate, water dikinase]-phosphate + phosphate + H(+) = [pyruvate, water dikinase] + diphosphate. Its function is as follows. Bifunctional serine/threonine kinase and phosphorylase involved in the regulation of the phosphoenolpyruvate synthase (PEPS) by catalyzing its phosphorylation/dephosphorylation. The chain is Putative phosphoenolpyruvate synthase regulatory protein from Legionella pneumophila (strain Lens).